The sequence spans 23 residues: Cardioactive peptide CAP23 (23 aa).

A disulfide bond links Cys7 and Cys19.

It belongs to the GBP/PSP1/paralytic peptide family.

Functionally, has excitatory effects on a semi-isolated heart from larval Manduca sexta, causing an inotropic effect at low concentrations of peptide and chronotropic and inotropic effects at high doses. This is Cardioactive peptide CAP23 from Spodoptera eridania (Southern armyworm).